Here is a 387-residue protein sequence, read N- to C-terminus: F-box/LRR-repeat/kelch-repeat protein At2g29770 (387 aa).

The tract at residues 1-34 (MVFISETSDDGSNGGDPTKNPQEEEEENLPPIPQ) is disordered. The F-box domain occupies 31-78 (PIPQGIPDELIESTVLLIRRCHYPTLSLLSKTFRRVISSSELYKSRFI). Residues 105–128 (CNIPRNISLHLREIKSLPPLNHGS) form an LRR 1 repeat. 2 Kelch repeats span residues 136–183 (HMYV…VIDG) and 184–231 (RIYV…FVTS). An LRR 2 repeat occupies 196–219 (DHWIEVFDIENRIWSSVPHHRYCN).

This chain is F-box/LRR-repeat/kelch-repeat protein At2g29770, found in Arabidopsis thaliana (Mouse-ear cress).